The chain runs to 288 residues: Cyclin-dependent kinase 2 homolog (288 aa).

The region spanning 4 to 284 (YHGLEKIGEG…AKQALEHAYF (281 aa)) is the Protein kinase domain. Residues 10–18 (IGEGTYGVV) and K32 contribute to the ATP site. Phosphothreonine is present on T14. Y15 bears the Phosphotyrosine mark. The Proton acceptor role is filled by D125. Residue T158 is modified to Phosphothreonine.

This sequence belongs to the protein kinase superfamily. CMGC Ser/Thr protein kinase family. CDC2/CDKX subfamily. As to quaternary structure, may form a complex composed of at least the catalytic subunit CRK2 and a cyclin. The cofactor is Mg(2+).

It is found in the cytoplasm. The catalysed reaction is L-seryl-[protein] + ATP = O-phospho-L-seryl-[protein] + ADP + H(+). The enzyme catalyses L-threonyl-[protein] + ATP = O-phospho-L-threonyl-[protein] + ADP + H(+). It carries out the reaction [DNA-directed RNA polymerase] + ATP = phospho-[DNA-directed RNA polymerase] + ADP + H(+). With respect to regulation, phosphorylation at Thr-14 or Tyr-15 inactivates the enzyme, while phosphorylation at Thr-158 activates it. Its function is as follows. Serine/threonine-protein kinase. Involved in the control of the cell cycle. Required for entry into S-phase and mitosis. Probable component of the kinase complex that phosphorylates the repetitive C-terminus of RNA polymerase II. This is Cyclin-dependent kinase 2 homolog from Plasmodium vivax.